The primary structure comprises 247 residues: Large ribosomal subunit protein uL3 (247 aa).

2 disordered regions span residues 124 to 145 and 218 to 247; these read RLGQSRGPMAHGSRYHRRPGSM and VGQEVKAEAKDTASTEKKQAETKNDSASAE. Residues 222–241 show a composition bias toward basic and acidic residues; it reads VKAEAKDTASTEKKQAETKN.

Belongs to the universal ribosomal protein uL3 family. Part of the 50S ribosomal subunit. Forms a cluster with proteins L14 and L19.

One of the primary rRNA binding proteins, it binds directly near the 3'-end of the 23S rRNA, where it nucleates assembly of the 50S subunit. This Oenococcus oeni (strain ATCC BAA-331 / PSU-1) protein is Large ribosomal subunit protein uL3.